The chain runs to 513 residues: Arabinoxylan arabinofuranohydrolase (513 aa).

Positions 1 to 26 (MRKKCSVCLWILVLLLSCLSGKSAYA) are cleaved as a signal peptide. Catalysis depends on Asp50, which acts as the Proton acceptor. Glu251 functions as the Proton donor in the catalytic mechanism. Substrate is bound at residue Asn314. Positions 382–511 (NRVEAETFAW…LFNFDYWQFT (130 aa)) constitute a CBM6 domain. Residues Glu385, Glu387, Asn409, Gln410, and Asp506 each contribute to the Ca(2+) site.

It is found in the secreted. It carries out the reaction Hydrolysis of terminal non-reducing alpha-L-arabinofuranoside residues in alpha-L-arabinosides.. It functions in the pathway glycan degradation; xylan degradation. Its function is as follows. Cleaves arabinose units from O-2- or O-3-monosubstituted xylose residues, thereby assisting in arabinoxylan (AX) and short-chain arabinoxylo-oligosaccharide (AXOS) degradation. Is more active on wheat bran AXOS than on wheat water-extractable AX and rye water-extractable AX. Does not display endoxylanase, xylosidase or arabinanase activity. In Bacillus subtilis (strain 168), this protein is Arabinoxylan arabinofuranohydrolase (xynD).